A 363-amino-acid polypeptide reads, in one-letter code: Oxygen-dependent coproporphyrinogen-III oxidase (363 aa).

Ser-119 contributes to the substrate binding site. Positions 123 and 133 each coordinate a divalent metal cation. The active-site Proton donor is His-133. Residue 135–137 (NYR) coordinates substrate. Residues His-167 and His-197 each coordinate a divalent metal cation. The interval 287 to 322 (YVEFNLVWDRGTIFGLQTNGRTESILMSLPPLVRWE) is important for dimerization.

The protein belongs to the aerobic coproporphyrinogen-III oxidase family. In terms of assembly, homodimer. Requires a divalent metal cation as cofactor.

The protein resides in the cytoplasm. The enzyme catalyses coproporphyrinogen III + O2 + 2 H(+) = protoporphyrinogen IX + 2 CO2 + 2 H2O. Its pathway is porphyrin-containing compound metabolism; protoporphyrin-IX biosynthesis; protoporphyrinogen-IX from coproporphyrinogen-III (O2 route): step 1/1. Functionally, involved in the heme and chlorophyll biosynthesis. Catalyzes the aerobic oxidative decarboxylation of propionate groups of rings A and B of coproporphyrinogen-III to yield the vinyl groups in protoporphyrinogen-IX. The polypeptide is Oxygen-dependent coproporphyrinogen-III oxidase (Parasynechococcus marenigrum (strain WH8102)).